The following is a 166-amino-acid chain: MALRMWASSTANALKLSSSASKSHLLPAFSISRCFSSVLEGLKYANSHEWVKHEGSVATIGITDHAQDHLGEVVFVELPEANSSVSKEKSFGAVESVKATSEILSPISGEVIEVNTKLTESPGLINSSPYEDGWMIKVKPSSPAELEALMGPKEYTKFCEEEDAAH.

The N-terminal 35 residues, 1–35 (MALRMWASSTANALKLSSSASKSHLLPAFSISRCF), are a transit peptide targeting the mitochondrion. The Lipoyl-binding domain occupies 57-139 (VATIGITDHA…YEDGWMIKVK (83 aa)). An N6-lipoyllysine modification is found at lysine 98. Phosphoserine is present on serine 141.

The protein belongs to the GcvH family. As to quaternary structure, the glycine cleavage system is composed of four proteins: P, T, L and H. It depends on (R)-lipoate as a cofactor. Post-translationally, S-nitrosylated and/or glutathionylated at unknown positions in response to nitric oxide.

The protein resides in the mitochondrion. With respect to regulation, inhibited by harpin, S-nitrosoglutathione (GSNO), nitric oxide, N-ethylmaleimide and 5,5'-dithiobis-(2-nitrobenzoic acid). Functionally, the glycine decarboxylase (GDC) or glycine cleavage system catalyzes the degradation of glycine. The H protein shuttles the methylamine group of glycine from the P protein to the T protein. The polypeptide is Glycine cleavage system H protein 3, mitochondrial (GDH3) (Arabidopsis thaliana (Mouse-ear cress)).